The chain runs to 122 residues: MIQMQTTLDVADNTGARAVMCIKVLGGSKRRYAGIGDIIKVSVKDAAPRGRVKKGEIYNAVVVRTAKGVRRKDGSLIRFGGNAAVLLNAKLEPIGTRIFGPVTRELRTEKFMKIVSLAPEVL.

Belongs to the universal ribosomal protein uL14 family. As to quaternary structure, part of the 50S ribosomal subunit. Forms a cluster with proteins L3 and L19. In the 70S ribosome, L14 and L19 interact and together make contacts with the 16S rRNA in bridges B5 and B8.

Its function is as follows. Binds to 23S rRNA. Forms part of two intersubunit bridges in the 70S ribosome. The chain is Large ribosomal subunit protein uL14 from Bordetella avium (strain 197N).